A 129-amino-acid chain; its full sequence is Small ribosomal subunit protein uS11 (129 aa).

Belongs to the universal ribosomal protein uS11 family. In terms of assembly, part of the 30S ribosomal subunit. Interacts with proteins S7 and S18. Binds to IF-3.

In terms of biological role, located on the platform of the 30S subunit, it bridges several disparate RNA helices of the 16S rRNA. Forms part of the Shine-Dalgarno cleft in the 70S ribosome. The chain is Small ribosomal subunit protein uS11 from Nitrosomonas europaea (strain ATCC 19718 / CIP 103999 / KCTC 2705 / NBRC 14298).